The primary structure comprises 887 residues: Phosphatidylinositol 3-kinase catalytic subunit type 3 (887 aa).

The C2 PI3K-type domain maps to Y35–Q184. A disordered region spans residues V149–D170. Residues P156–D170 show a composition bias toward polar residues. The residue at position 163 (T163) is a Phosphothreonine; by AMPK. Position 165 is a phosphoserine; by AMPK (S165). 3 positions are modified to phosphoserine: S244, S261, and S282. In terms of domain architecture, PIK helical spans D283–V520. The tract at residues T447–D467 is disordered. In terms of domain architecture, PI3K/PI4K catalytic spans I605–F871. The segment at L611–M617 is G-loop. Residues G740–N748 are catalytic loop. Residues H759–N780 form an activation loop region.

This sequence belongs to the PI3/PI4-kinase family. In terms of assembly, component of the PI3K (PI3KC3/PI3K-III/class III phosphatidylinositol 3-kinase) complex the core of which is composed of the catalytic subunit PIK3C3, the regulatory subunit PIK3R4 and BECN1 associating with additional regulatory/auxiliary subunits to form alternative complex forms. Alternative complex forms containing a fourth regulatory subunit in a mutually exclusive manner are: the PI3K complex I (PI3KC3-C1) containing ATG14, and the PI3K complex II (PI3KC3-C2) containing UVRAG. PI3KC3-C1 displays a V-shaped architecture with PIK3R4 serving as a bridge between PIK3C3 and the ATG14:BECN1 subcomplex. Both, PI3KC3-C1 and PI3KC3-C2, can associate with further regulatory subunits such as RUBCN, SH3GLB1/Bif-1 and AMBRA1. PI3KC3-C1 probably associates with PIK3CB. Interacts with RAB7A in the presence of PIK3R4. Interacts with AMBRA1. Interacts with BECN1P1/BECN2. Interacts with SLAMF1. May be a component of a complex composed of RAB5A (in GDP-bound form), DYN2 and PIK3C3. Interacts with NCKAP1L. Interacts with ATG14; this interaction is increased in the absence of TMEM39A. Interacts with STEEP1; the interaction is STING1-dependent and required for trafficking of STING1 from the endoplasmic reticulum. Interacts with YWHAG. Interacts with ARMC3. Requires Mn(2+) as cofactor. In terms of processing, ubiquitinated via 'Lys-29'- and 'Lys-48'-linked ubiquitination by UBE3C, promoting its degradation. Deubiquitination by ZRANB1/TRABID promotes its stabilization, leading to autophagosome maturation. Ubiquitously expressed, with a highest expression in skeletal muscle.

The protein localises to the midbody. It is found in the late endosome. It localises to the cytoplasmic vesicle. Its subcellular location is the autophagosome. It carries out the reaction a 1,2-diacyl-sn-glycero-3-phospho-(1D-myo-inositol) + ATP = a 1,2-diacyl-sn-glycero-3-phospho-(1D-myo-inositol-3-phosphate) + ADP + H(+). Its function is as follows. Catalytic subunit of the PI3K complex that mediates formation of phosphatidylinositol 3-phosphate; different complex forms are believed to play a role in multiple membrane trafficking pathways: PI3KC3-C1 is involved in initiation of autophagosomes and PI3KC3-C2 in maturation of autophagosomes and endocytosis. As part of PI3KC3-C1, promotes endoplasmic reticulum membrane curvature formation prior to vesicle budding. Involved in regulation of degradative endocytic trafficking and required for the abscission step in cytokinesis, probably in the context of PI3KC3-C2. Involved in the transport of lysosomal enzyme precursors to lysosomes. Required for transport from early to late endosomes. Functionally, (Microbial infection) Kinase activity is required for SARS coronavirus-2/SARS-CoV-2 replication. This is Phosphatidylinositol 3-kinase catalytic subunit type 3 from Homo sapiens (Human).